Reading from the N-terminus, the 338-residue chain is MLAVRSLQHLSTVVLITAYGLVLVWYTVFGASPLHRCIYAVRPTGTNNDTALVWMKMNQTLLFLGAPTHPPNGGWRNHAHICYANLIAGRVVPFQVPPDAMNRRIMNVHEAVNCLETLWYTRVRLVVVGWFLYLAFVALHQRRCMFGVVSPAHKMVAPATYLLNYAGRIVSSVFLQYPYTKITRLLCELSVQRQNLVQLFETDPVTFLYHRPAIGVIVGCELMLRFVAVGLIVGTAFISRGACAITYPLFLTITTWCFVSTIGLTELYCILRRGPAPKNADKAAAPGRSKGLSGVCGRCCSIILSGIAVRLCYIAVVAGVVLVALHYEQEIQRRLFDV.

Positions 1-30 (MLAVRSLQHLSTVVLITAYGLVLVWYTVFG) are cleaved as a signal peptide. Over 31-121 (ASPLHRCIYA…VNCLETLWYT (91 aa)) the chain is Extracellular. An involved in fusion region spans residues 31–121 (ASPLHRCIYA…VNCLETLWYT (91 aa)). N-linked (GlcNAc...) asparagine; by host glycosylation is found at Asn48 and Asn58. A helical membrane pass occupies residues 122–140 (RVRLVVVGWFLYLAFVALH). Residues 141–212 (QRRCMFGVVS…DPVTFLYHRP (72 aa)) lie on the Cytoplasmic side of the membrane. A helical membrane pass occupies residues 213-233 (AIGVIVGCELMLRFVAVGLIV). The Extracellular portion of the chain corresponds to 234–243 (GTAFISRGAC). The helical transmembrane segment at 244–264 (AITYPLFLTITTWCFVSTIGL) threads the bilayer. Over 265-301 (TELYCILRRGPAPKNADKAAAPGRSKGLSGVCGRCCS) the chain is Cytoplasmic. The interaction with UL20 stretch occupies residues 265-301 (TELYCILRRGPAPKNADKAAAPGRSKGLSGVCGRCCS). The helical transmembrane segment at 302 to 322 (IILSGIAVRLCYIAVVAGVVL) threads the bilayer. Residues 323-338 (VALHYEQEIQRRLFDV) lie on the Extracellular side of the membrane.

It belongs to the alphaherpesvirinae glycoprotein K family. Interacts (via UL20 interaction region) with protein UL20 (via N-terminus); this interaction probably plays a role in the coordinate transport of protein UL20 and gK to the trans-Golgi network (TGN), and is required for the cell surface expression of gK. N-glycosylated.

The protein localises to the host cell membrane. The protein resides in the host endosome membrane. It localises to the host Golgi apparatus membrane. Its function is as follows. Glycoprotein that probably modulates membrane fusion events during secondary envelopment of cytoplasmic capsids that bud into specific trans-Golgi network (TGN)-derived membranes. Also plays a role, together with gB, in virus-induced cell-to-cell fusion (syncytia formation). Seems to block fusion of virions with infected-cell membranes. The protein is Envelope glycoprotein K (gK) of Homo sapiens (Human).